Here is a 241-residue protein sequence, read N- to C-terminus: Pyridoxine 5'-phosphate synthase (241 aa).

Asn7 is a 3-amino-2-oxopropyl phosphate binding site. 9 to 10 (DH) contacts 1-deoxy-D-xylulose 5-phosphate. Residue Arg18 participates in 3-amino-2-oxopropyl phosphate binding. Catalysis depends on His43, which acts as the Proton acceptor. 2 residues coordinate 1-deoxy-D-xylulose 5-phosphate: Arg45 and His50. The active-site Proton acceptor is the Glu70. 1-deoxy-D-xylulose 5-phosphate is bound at residue Thr100. His191 (proton donor) is an active-site residue. 3-amino-2-oxopropyl phosphate is bound by residues Gly192 and 213–214 (GH).

It belongs to the PNP synthase family. As to quaternary structure, homooctamer; tetramer of dimers.

The protein localises to the cytoplasm. It catalyses the reaction 3-amino-2-oxopropyl phosphate + 1-deoxy-D-xylulose 5-phosphate = pyridoxine 5'-phosphate + phosphate + 2 H2O + H(+). It participates in cofactor biosynthesis; pyridoxine 5'-phosphate biosynthesis; pyridoxine 5'-phosphate from D-erythrose 4-phosphate: step 5/5. In terms of biological role, catalyzes the complicated ring closure reaction between the two acyclic compounds 1-deoxy-D-xylulose-5-phosphate (DXP) and 3-amino-2-oxopropyl phosphate (1-amino-acetone-3-phosphate or AAP) to form pyridoxine 5'-phosphate (PNP) and inorganic phosphate. This Nitrosospira multiformis (strain ATCC 25196 / NCIMB 11849 / C 71) protein is Pyridoxine 5'-phosphate synthase.